The chain runs to 376 residues: Methylthioribose-1-phosphate isomerase (376 aa).

The active-site Proton donor is the D256.

Belongs to the eIF-2B alpha/beta/delta subunits family. MtnA subfamily.

The protein localises to the cytoplasm. Its subcellular location is the nucleus. It carries out the reaction 5-(methylsulfanyl)-alpha-D-ribose 1-phosphate = 5-(methylsulfanyl)-D-ribulose 1-phosphate. Its pathway is amino-acid biosynthesis; L-methionine biosynthesis via salvage pathway; L-methionine from S-methyl-5-thio-alpha-D-ribose 1-phosphate: step 1/6. Functionally, catalyzes the interconversion of methylthioribose-1-phosphate (MTR-1-P) into methylthioribulose-1-phosphate (MTRu-1-P). The sequence is that of Methylthioribose-1-phosphate isomerase from Vitis vinifera (Grape).